The chain runs to 125 residues: Phosphoribosyl-AMP cyclohydrolase (125 aa).

Asp80 serves as a coordination point for Mg(2+). Cys81 contributes to the Zn(2+) binding site. Mg(2+)-binding residues include Asp82 and Asp84. Zn(2+)-binding residues include Cys97 and Cys104.

This sequence belongs to the PRA-CH family. Homodimer. Mg(2+) serves as cofactor. It depends on Zn(2+) as a cofactor.

The protein localises to the cytoplasm. The catalysed reaction is 1-(5-phospho-beta-D-ribosyl)-5'-AMP + H2O = 1-(5-phospho-beta-D-ribosyl)-5-[(5-phospho-beta-D-ribosylamino)methylideneamino]imidazole-4-carboxamide. It participates in amino-acid biosynthesis; L-histidine biosynthesis; L-histidine from 5-phospho-alpha-D-ribose 1-diphosphate: step 3/9. Functionally, catalyzes the hydrolysis of the adenine ring of phosphoribosyl-AMP. This Leifsonia xyli subsp. xyli (strain CTCB07) protein is Phosphoribosyl-AMP cyclohydrolase.